Here is a 316-residue protein sequence, read N- to C-terminus: MQILLANPRGFCAGVDRAISIVENALAIYGAPIYVRHEVVHNRYVVDSLRERGAIFIEQISEVPDGAILIFSAHGVSQAVRNEAKSRDLTVFDATCPLVTKVHMEVARASRRGEESILIGHAGHPEVEGTMGQYSNPEGGMYLVESPDDVWKLTVKNEEKLSFMTQTTLSVDDTSDVIDALRKRFPKIVGPRKDDICYATTNRQEAVRALAEQAEVVLVVGSKNSSNSNRLAELAQRMGKHAFLIDDAKDIQEEWVKEVKCVGVTAGASAPDILVQNVVARLQQLGGGEAIPLEGREENIVFEVPKELRVDIREVD.

A [4Fe-4S] cluster-binding site is contributed by Cys12. (2E)-4-hydroxy-3-methylbut-2-enyl diphosphate contacts are provided by His41 and His74. The dimethylallyl diphosphate site is built by His41 and His74. Residues His41 and His74 each contribute to the isopentenyl diphosphate site. A [4Fe-4S] cluster-binding site is contributed by Cys96. Position 124 (His124) interacts with (2E)-4-hydroxy-3-methylbut-2-enyl diphosphate. His124 provides a ligand contact to dimethylallyl diphosphate. His124 lines the isopentenyl diphosphate pocket. Glu126 serves as the catalytic Proton donor. Residue Thr167 coordinates (2E)-4-hydroxy-3-methylbut-2-enyl diphosphate. A [4Fe-4S] cluster-binding site is contributed by Cys197. (2E)-4-hydroxy-3-methylbut-2-enyl diphosphate contacts are provided by Ser225, Ser226, Asn227, and Ser269. Residues Ser225, Ser226, Asn227, and Ser269 each coordinate dimethylallyl diphosphate. 4 residues coordinate isopentenyl diphosphate: Ser225, Ser226, Asn227, and Ser269.

The protein belongs to the IspH family. Homodimer. It depends on [4Fe-4S] cluster as a cofactor.

It catalyses the reaction isopentenyl diphosphate + 2 oxidized [2Fe-2S]-[ferredoxin] + H2O = (2E)-4-hydroxy-3-methylbut-2-enyl diphosphate + 2 reduced [2Fe-2S]-[ferredoxin] + 2 H(+). It carries out the reaction dimethylallyl diphosphate + 2 oxidized [2Fe-2S]-[ferredoxin] + H2O = (2E)-4-hydroxy-3-methylbut-2-enyl diphosphate + 2 reduced [2Fe-2S]-[ferredoxin] + 2 H(+). Its pathway is isoprenoid biosynthesis; dimethylallyl diphosphate biosynthesis; dimethylallyl diphosphate from (2E)-4-hydroxy-3-methylbutenyl diphosphate: step 1/1. It functions in the pathway isoprenoid biosynthesis; isopentenyl diphosphate biosynthesis via DXP pathway; isopentenyl diphosphate from 1-deoxy-D-xylulose 5-phosphate: step 6/6. In terms of biological role, catalyzes the conversion of 1-hydroxy-2-methyl-2-(E)-butenyl 4-diphosphate (HMBPP) into a mixture of isopentenyl diphosphate (IPP) and dimethylallyl diphosphate (DMAPP). Acts in the terminal step of the DOXP/MEP pathway for isoprenoid precursor biosynthesis. This Shigella flexneri serotype 5b (strain 8401) protein is 4-hydroxy-3-methylbut-2-enyl diphosphate reductase.